The following is a 111-amino-acid chain: P antigen family member 2 (111 aa).

The segment at 1 to 66 is disordered; that stretch reads MSELLRARSQ…NQAVPAFQGP (66 aa). The span at 8 to 24 shows a compositional bias: polar residues; the sequence is RSQSSERGNDQESSQPV.

It belongs to the GAGE family.

The protein is P antigen family member 2 (PAGE2) of Homo sapiens (Human).